The following is a 167-amino-acid chain: ATP synthase subunit b (167 aa).

The chain crosses the membrane as a helical span at residues 9–29 (ALPLGNMLFIIIAFLLLMLIL).

The protein belongs to the ATPase B chain family. As to quaternary structure, F-type ATPases have 2 components, F(1) - the catalytic core - and F(0) - the membrane proton channel. F(1) has five subunits: alpha(3), beta(3), gamma(1), delta(1), epsilon(1). F(0) has three main subunits: a(1), b(2) and c(10-14). The alpha and beta chains form an alternating ring which encloses part of the gamma chain. F(1) is attached to F(0) by a central stalk formed by the gamma and epsilon chains, while a peripheral stalk is formed by the delta and b chains.

The protein resides in the cell membrane. Its function is as follows. F(1)F(0) ATP synthase produces ATP from ADP in the presence of a proton or sodium gradient. F-type ATPases consist of two structural domains, F(1) containing the extramembraneous catalytic core and F(0) containing the membrane proton channel, linked together by a central stalk and a peripheral stalk. During catalysis, ATP synthesis in the catalytic domain of F(1) is coupled via a rotary mechanism of the central stalk subunits to proton translocation. Functionally, component of the F(0) channel, it forms part of the peripheral stalk, linking F(1) to F(0). This chain is ATP synthase subunit b, found in Leuconostoc mesenteroides subsp. mesenteroides (strain ATCC 8293 / DSM 20343 / BCRC 11652 / CCM 1803 / JCM 6124 / NCDO 523 / NBRC 100496 / NCIMB 8023 / NCTC 12954 / NRRL B-1118 / 37Y).